We begin with the raw amino-acid sequence, 185 residues long: Elongation factor P (185 aa).

It belongs to the elongation factor P family.

The protein resides in the cytoplasm. It participates in protein biosynthesis; polypeptide chain elongation. Functionally, involved in peptide bond synthesis. Stimulates efficient translation and peptide-bond synthesis on native or reconstituted 70S ribosomes in vitro. Probably functions indirectly by altering the affinity of the ribosome for aminoacyl-tRNA, thus increasing their reactivity as acceptors for peptidyl transferase. This chain is Elongation factor P, found in Trichodesmium erythraeum (strain IMS101).